Consider the following 153-residue polypeptide: Superoxide dismutase [Cu-Zn] (153 aa).

Cu cation contacts are provided by His-45, His-47, and His-62. Cys-56 and Cys-145 form a disulfide bridge. His-62, His-70, His-79, and Asp-82 together coordinate Zn(2+). His-119 provides a ligand contact to Cu cation.

The protein belongs to the Cu-Zn superoxide dismutase family. Homodimer. Cu cation is required as a cofactor. It depends on Zn(2+) as a cofactor.

The protein resides in the cytoplasm. The catalysed reaction is 2 superoxide + 2 H(+) = H2O2 + O2. Destroys radicals which are normally produced within the cells and which are toxic to biological systems. The polypeptide is Superoxide dismutase [Cu-Zn] (Drosophila teissieri (Fruit fly)).